The primary structure comprises 794 residues: MRRCAWPLLRLSSRVGLALRHGGAVRLRQAAASSSSSSSGGGGLRAPDTSLFVPVPLKPVEGAAEEDVGAELTRPLDKGEVLKNLNKFYKRKEIQRLGTENGLDARLFHQAFISFRKYIMESSSVSADLHIILNDICCGAGHVDDLFPFFLRHAKQIFPMLDCMDDLRKISDLRLPPNWYPEARAIQRKIIFHAGPTNSGKTYHAIQRFLSAKSGIYCGPLKLLAHEIFQKSNAANVPCDLVTGEERVYASEDAKQASHIACTIEMCSTNTPYEVAVIDEIQMIRDPARGWAWTRALLGLCAEEIHVCGEGAAIDLVTELMYTTGEEVEVRNYKRLTPLTVLDYALESLDNLQPGDCIVCFSKNDIYSVSRQIEARGLECAVIYGSLPPGTKLEQAKKFNDPNDPCKILVATDAIGMGLNLCIKRIIFNSIVKPTVNEKGEKEIDSITTSQALQIAGRAGRFGSSFKQGEVTAMHRDDLLQLKEILSEAVPPVKAAGLHPTPEQIEMFAYHLPDATLSNLIDIFVSLSQVDGLYFVCNIDDFKFLADMIQHIPLNLRSRYVFCTAPLNRKEPFVCTTLLKFARQFSRNEPLTFDWLCRHTKWPLAPPKNIKELVHLEAVHDVFDLYLWLSYRFMDMFPDAALVRDIQKKLDDIIQIGVCNITKLIRASQSGAAPGAAEVMSEGFPLSRTKRDARTVSDHRDAKSAEPLSIALEVPGERRAKSLRTYRSATRQEDLKSHGRGSLANRLLREGLLTQEMLRQLESEWQDQHRSGRYGLASKRNDQSSSKEMGKKKK.

The transit peptide at 1-30 (MRRCAWPLLRLSSRVGLALRHGGAVRLRQA) directs the protein to the mitochondrion. The Helicase ATP-binding domain occupies 182 to 322 (EARAIQRKII…AIDLVTELMY (141 aa)). ATP is bound at residue 195 to 202 (GPTNSGKT). A Helicase C-terminal domain is found at 341 to 506 (VLDYALESLD…GLHPTPEQIE (166 aa)). 2 disordered regions span residues 678 to 741 (EVMS…HGRG) and 764 to 794 (EWQD…KKKK). Basic and acidic residues predominate over residues 689-704 (TKRDARTVSDHRDAKS).

The protein belongs to the helicase family. Requires Mg(2+) as cofactor. Mn(2+) serves as cofactor.

Its subcellular location is the nucleus. It is found in the mitochondrion matrix. The protein localises to the mitochondrion nucleoid. The enzyme catalyses ATP + H2O = ADP + phosphate + H(+). Its function is as follows. Major helicase player in mitochondrial RNA metabolism. Component of the mitochondrial degradosome (mtEXO) complex, that degrades 3' overhang double-stranded RNA with a 3'-to-5' directionality in an ATP-dependent manner. ATPase and ATP-dependent multisubstrate helicase, able to unwind double-stranded (ds) DNA and RNA, and RNA/DNA heteroduplexes in the 5'-to-3' direction. Plays a role in the RNA surveillance system in mitochondria; regulates the stability of mature mRNAs, the removal of aberrantly formed mRNAs and the rapid degradation of non coding processing intermediates. Also implicated in recombination and chromatin maintenance pathways. May protect cells from apoptosis. Associates with mitochondrial DNA. In Gallus gallus (Chicken), this protein is ATP-dependent RNA helicase SUPV3L1, mitochondrial (SUPV3L1).